A 123-amino-acid chain; its full sequence is UPF0102 protein Csal_2201 (123 aa).

This sequence belongs to the UPF0102 family.

The chain is UPF0102 protein Csal_2201 from Chromohalobacter salexigens (strain ATCC BAA-138 / DSM 3043 / CIP 106854 / NCIMB 13768 / 1H11).